A 155-amino-acid polypeptide reads, in one-letter code: Late embryogenesis abundant protein 2 (155 aa).

Residues 1–155 (MTSHDQSYRA…DKDHFPTNRH (155 aa)) are disordered. Basic and acidic residues-rich tracts occupy residues 11–21 (GEAKGRTEEKT) and 28–39 (IEDKAQAAKEKA). A compositionally biased stretch (low complexity) spans 40–78 (QQAAQTAKDKTSQTAQAAKEKTQQTAQAAKDKTQQTTQA). 2 repeat units span residues 53–63 (TAQAAKEKTQQ) and 64–74 (TAQAAKDKTQQ). The interval 53-74 (TAQAAKEKTQQTAQAAKDKTQQ) is 2 X 11 AA approximate tandem repeats of T-A-Q-A-A-K-E-K-T-Q-Q. Over residues 79–95 (TKEKAQDTTGRAKEKGS) the composition is skewed to basic and acidic residues. Over residues 97 to 120 (MGQSTKETAQSGKDNSAGFLQQTG) the composition is skewed to polar residues. Positions 144 to 155 (DQDKDHFPTNRH) are enriched in basic and acidic residues.

It belongs to the LEA type 4 family. As to expression, highest expression is found in seeds. No expression detected in adult tissues.

This Cicer arietinum (Chickpea) protein is Late embryogenesis abundant protein 2.